The primary structure comprises 616 residues: Elongation factor 4 (616 aa).

One can recognise a tr-type G domain in the interval 14-195 (SRIRNFCIIA…EVIRQVPPPV (182 aa)). GTP is bound by residues 26–31 (DHGKST) and 142–145 (NKID).

It belongs to the TRAFAC class translation factor GTPase superfamily. Classic translation factor GTPase family. LepA subfamily.

Its subcellular location is the cell membrane. The enzyme catalyses GTP + H2O = GDP + phosphate + H(+). In terms of biological role, required for accurate and efficient protein synthesis under certain stress conditions. May act as a fidelity factor of the translation reaction, by catalyzing a one-codon backward translocation of tRNAs on improperly translocated ribosomes. Back-translocation proceeds from a post-translocation (POST) complex to a pre-translocation (PRE) complex, thus giving elongation factor G a second chance to translocate the tRNAs correctly. Binds to ribosomes in a GTP-dependent manner. In Nocardia farcinica (strain IFM 10152), this protein is Elongation factor 4.